A 544-amino-acid chain; its full sequence is Lysophosphatidylcholine acyltransferase 2 (544 aa).

Residues Met1–Met58 lie on the Cytoplasmic side of the membrane. A helical; Signal-anchor for type II membrane protein transmembrane segment spans residues Phe59 to Leu79. The Lumenal segment spans residues Ala80–Asp544. An HXXXXD motif motif is present at residues His146 to Asp151. An EGTC motif motif is present at residues Glu220–Cys223. EF-hand domains are found at residues Pro391–Pro426 and Asn428–Val463. The Ca(2+) site is built by Asp404, Asn406, Asp408, Ser410, Glu415, Asp441, Asp443, Asp445, Tyr447, and Glu452. The span at Thr520 to Glu532 shows a compositional bias: polar residues. Positions Thr520–Asp544 are disordered.

Belongs to the 1-acyl-sn-glycerol-3-phosphate acyltransferase family. Highest expression is found in resident macrophages and casein-induced neutrophils followed by skin, colon, spleen and thioglycollate-induced macrophages. Detected in erythroleukemic cells but not in reticulocytes.

The protein resides in the endoplasmic reticulum membrane. The protein localises to the golgi apparatus membrane. Its subcellular location is the cell membrane. It is found in the lipid droplet. The catalysed reaction is a 1-acyl-sn-glycero-3-phosphocholine + an acyl-CoA = a 1,2-diacyl-sn-glycero-3-phosphocholine + CoA. It carries out the reaction a 1-O-alkyl-sn-glycero-3-phosphocholine + acetyl-CoA = a 1-O-alkyl-2-acetyl-sn-glycero-3-phosphocholine + CoA. It catalyses the reaction a 1-acyl-sn-glycero-3-phosphate + an acyl-CoA = a 1,2-diacyl-sn-glycero-3-phosphate + CoA. The enzyme catalyses a 1-O-(1Z-alkenyl)-sn-glycero-3-phosphocholine + an acyl-CoA = a 1-O-(1Z-alkenyl)-2-acyl-sn-glycero-3-phosphocholine + CoA. The catalysed reaction is 1-O-octadecyl-sn-glycero-3-phosphocholine + acetyl-CoA = 1-O-octadecyl-2-acetyl-sn-glycero-3-phosphocholine + CoA. It carries out the reaction 1-hexadecanoyl-sn-glycero-3-phosphocholine + acetyl-CoA = 1-hexadecanoyl-2-acetyl-sn-glycero-3-phosphocholine + CoA. It catalyses the reaction 1-octadecanoyl-sn-glycero-3-phosphocholine + acetyl-CoA = 1-octadecanoyl-2-acetyl-sn-glycero-3-phosphocholine + CoA. The enzyme catalyses a 1-O-(1Z-alkenyl)-sn-glycero-3-phosphocholine + acetyl-CoA = 1-O-(1Z)-alkenyl-2-acetyl-sn-glycero-3-phosphocholine + CoA. The catalysed reaction is 1-O-hexadecyl-sn-glycero-3-phosphocholine + acetyl-CoA = 1-O-hexadecyl-2-acetyl-sn-glycero-3-phosphocholine + CoA. It carries out the reaction 1-O-octadecyl-sn-glycero-3-phosphocholine + (5Z,8Z,11Z,14Z)-eicosatetraenoyl-CoA = 1-O-octadecyl-2-(5Z,8Z,11Z,14Z)-eicosatetraenoyl-sn-glycero-3-phosphocholine + CoA. It catalyses the reaction 1-hexadecanoyl-sn-glycero-3-phosphate + (9Z)-octadecenoyl-CoA = 1-hexadecanoyl-2-(9Z-octadecenoyl)-sn-glycero-3-phosphate + CoA. The enzyme catalyses 1-(9Z-octadecenoyl)-sn-glycero-3-phosphate + (9Z)-octadecenoyl-CoA = 1,2-di-(9Z-octadecenoyl)-sn-glycero-3-phosphate + CoA. The catalysed reaction is 1-(9Z-octadecenoyl)-sn-glycero-3-phosphate + hexadecanoyl-CoA = 1-(9Z)-octadecenoyl-2-hexadecanoyl-sn-glycero-3-phosphate + CoA. It carries out the reaction 1-heptadecanoyl-sn-glycero-3-phosphate + (9Z)-octadecenoyl-CoA = 1-heptadecanoyl-2-(9Z)-octadecenoyl-sn-glycero-3-phosphate + CoA. It catalyses the reaction 1-octadecanoyl-sn-glycero-3-phosphate + (9Z)-octadecenoyl-CoA = 1-octadecanoyl-2-(9Z-octadecenoyl)-sn-glycero-3-phosphate + CoA. The enzyme catalyses heptadecanoyl-CoA + 1-(9Z-octadecenoyl)-sn-glycero-3-phosphate = 1-(9Z)-octadecenoyl-2-heptadecanoyl-sn-glycero-3-phosphate + CoA. The catalysed reaction is 1-(9Z-octadecenoyl)-sn-glycero-3-phosphate + (9Z,12Z)-octadecadienoyl-CoA = 1-(9Z)-octadecenoyl-2-(9Z,12Z)-octadecadienoyl-sn-glycero-3-phosphate + CoA. It carries out the reaction 1-(9Z-octadecenoyl)-sn-glycero-3-phosphate + tetradecanoyl-CoA = 1-(9Z)-octadecenoyl-2-tetradecanoyl-sn-glycero-3-phosphate + CoA. It catalyses the reaction pentadecanoyl-CoA + 1-(9Z-octadecenoyl)-sn-glycero-3-phosphate = 1-(9Z)-octadecenoyl-2-pentadecanoyl-sn-glycero-3-phosphate + CoA. The enzyme catalyses nonadecanoyl-CoA + 1-(9Z-octadecenoyl)-sn-glycero-3-phosphate = 1-(9Z)-octadecenoyl-2-nonadecanoyl-sn-glycero-3-phosphate + CoA. The catalysed reaction is 1-hexadecanoyl-sn-glycero-3-phosphocholine + (9Z)-octadecenoyl-CoA = 1-hexadecanoyl-2-(9Z-octadecenoyl)-sn-glycero-3-phosphocholine + CoA. Its pathway is lipid metabolism; phospholipid metabolism. Its activity is regulated as follows. Acetyltransferase activity is increased following acute inflammatory stimulation by lipopolysaccharide (LPS). Acyltransferase activity is unchanged. In terms of biological role, exhibits both acyltransferase and acetyltransferase activities. Activity is calcium-dependent. Catalyzes the conversion of lysophosphatidylcholine (1-acyl-sn-glycero-3-phosphocholine or LPC) into phosphatidylcholine (1,2-diacyl-sn-glycero-3-phosphocholine or PC). Catalyzes the conversion 1-acyl-sn-glycerol-3-phosphate (lysophosphatidic acid or LPA) into 1,2-diacyl-sn-glycerol-3-phosphate (phosphatidic acid or PA) by incorporating an acyl moiety at the sn-2 position of the glycerol backbone. Involved in platelet-activating factor (PAF) biosynthesis by catalyzing the conversion of the PAF precursor, 1-O-alkyl-sn-glycero-3-phosphocholine (lyso-PAF) into 1-O-alkyl-2-acetyl-sn-glycero-3-phosphocholine (PAF). Also converts lyso-PAF to 1-O-alkyl-2-acyl-sn-glycero-3-phosphocholine (PC), a major component of cell membranes and a PAF precursor. Under resting conditions, acyltransferase activity is preferred. Upon acute inflammatory stimulus, acetyltransferase activity is enhanced and PAF synthesis increases. Involved in the regulation of lipid droplet number and size. The polypeptide is Lysophosphatidylcholine acyltransferase 2 (Lpcat2) (Mus musculus (Mouse)).